The sequence spans 294 residues: Elongation factor Ts (294 aa).

The tract at residues 79–82 is involved in Mg(2+) ion dislocation from EF-Tu; the sequence is TDFV.

The protein belongs to the EF-Ts family.

Its subcellular location is the cytoplasm. Functionally, associates with the EF-Tu.GDP complex and induces the exchange of GDP to GTP. It remains bound to the aminoacyl-tRNA.EF-Tu.GTP complex up to the GTP hydrolysis stage on the ribosome. The polypeptide is Elongation factor Ts (tsf) (Geobacillus kaustophilus (strain HTA426)).